Here is a 415-residue protein sequence, read N- to C-terminus: Serine/threonine transporter SstT (415 aa).

The next 8 helical transmembrane spans lie at Ile21 to Ala41, Leu45 to Val65, Phe85 to Phe105, Ala142 to Phe162, Leu193 to Gly213, Leu217 to Val237, Val289 to Leu309, and Val331 to Ile351.

Belongs to the dicarboxylate/amino acid:cation symporter (DAACS) (TC 2.A.23) family.

It localises to the cell inner membrane. It catalyses the reaction L-serine(in) + Na(+)(in) = L-serine(out) + Na(+)(out). The enzyme catalyses L-threonine(in) + Na(+)(in) = L-threonine(out) + Na(+)(out). Involved in the import of serine and threonine into the cell, with the concomitant import of sodium (symport system). The polypeptide is Serine/threonine transporter SstT (Pectobacterium atrosepticum (strain SCRI 1043 / ATCC BAA-672) (Erwinia carotovora subsp. atroseptica)).